Here is a 280-residue protein sequence, read N- to C-terminus: MPELPEVETVRKGLEKLVVGKTIQEVIVFWPRIIESPEVDVFQGQLAGQTIEGIERRGKFLIFKLSDNDMISHLRMEGKYEFHQADDEIAKHTHVMFTFTDGTQLRYLDVRKFGRMTLVPKNQGHQYKGILALGPEPTPDVFQLATFQQGLKKHHKAIKPLLLDQKLVTGLGNIYVDEALWQAQIHPEQPADSLKPAEVATLYQAIIDVLARAVEAGGTTIRTYLNALGEAGTFQVALNVYGQTGLPCNRCGTPIVKTKVAQRGTHYCPQCQQLKGRRLK.

The active-site Schiff-base intermediate with DNA is the Pro2. The active-site Proton donor is Glu3. Catalysis depends on Lys59, which acts as the Proton donor; for beta-elimination activity. 2 residues coordinate DNA: His92 and Arg111. The FPG-type zinc-finger motif lies at Asn239 to Gln273. Arg263 serves as the catalytic Proton donor; for delta-elimination activity.

The protein belongs to the FPG family. In terms of assembly, monomer. Requires Zn(2+) as cofactor.

It carries out the reaction Hydrolysis of DNA containing ring-opened 7-methylguanine residues, releasing 2,6-diamino-4-hydroxy-5-(N-methyl)formamidopyrimidine.. The enzyme catalyses 2'-deoxyribonucleotide-(2'-deoxyribose 5'-phosphate)-2'-deoxyribonucleotide-DNA = a 3'-end 2'-deoxyribonucleotide-(2,3-dehydro-2,3-deoxyribose 5'-phosphate)-DNA + a 5'-end 5'-phospho-2'-deoxyribonucleoside-DNA + H(+). Involved in base excision repair of DNA damaged by oxidation or by mutagenic agents. Acts as a DNA glycosylase that recognizes and removes damaged bases. Has a preference for oxidized purines, such as 7,8-dihydro-8-oxoguanine (8-oxoG). Has AP (apurinic/apyrimidinic) lyase activity and introduces nicks in the DNA strand. Cleaves the DNA backbone by beta-delta elimination to generate a single-strand break at the site of the removed base with both 3'- and 5'-phosphates. The polypeptide is Formamidopyrimidine-DNA glycosylase (Enterococcus faecalis (strain ATCC 700802 / V583)).